The primary structure comprises 311 residues: MPAPRAPRALAAAAPASGKAKLTHPGKAILAGGLAGGIEICITFPTEYVKTQLQLDERSHPPRYRGIGDCVRQTVRSHGVLGLYRGLSSLLYGSIPKAAVRFGMFEFLSNHMRDAQGRLDSTRGLLCGLGAGVAEAVVVVCPMETIKVKFIHDQTSPNPKYRGFFHGVREIVREQGLKGTYQGLTATVLKQGSNQAIRFFVMTSLRNWYRGDNPNKPMNPLITGVFGAIAGAASVFGNTPLDVIKTRMQGLEAHKYRNTWDCGLQILKKEGLKAFYKGTVPRLGRVCLDVAIVFVIYDEVVKLLNKVWKTD.

Positions 1–13 (MPAPRAPRALAAA) are cleaved as a propeptide — removed in mature form. Solcar repeat units follow at residues 23–111 (THPG…LSNH), 122–208 (TRGL…LRNW), and 218–303 (MNPL…VVKL). Helical transmembrane passes span 29 to 46 (ILAG…TFPT), 86 to 105 (GLSS…FGMF), and 129 to 143 (LGAG…VCPM). Serine 156 bears the Phosphoserine mark. 3 consecutive transmembrane segments (helical) span residues 183 to 202 (GLTA…FFVM), 224 to 241 (GVFG…NTPL), and 278 to 297 (GTVP…FVIY).

It belongs to the mitochondrial carrier (TC 2.A.29) family. In terms of processing, possesses a short cleavable presequence, which, however, is found to be dispensable both for targeting to mitochondria and insertion into the inner membrane. However, the presequence is required to keep SLC25A1 in a soluble state and thus in an import-competent state. Mature SLC25A1 lacking the presequence is prone to aggregation.

It is found in the mitochondrion inner membrane. It carries out the reaction (S)-malate(in) + citrate(out) = (S)-malate(out) + citrate(in). It catalyses the reaction D-threo-isocitrate(in) + citrate(out) = D-threo-isocitrate(out) + citrate(in). The catalysed reaction is citrate(out) + succinate(in) = citrate(in) + succinate(out). The enzyme catalyses cis-aconitate(in) + citrate(out) = cis-aconitate(out) + citrate(in). It carries out the reaction trans-aconitate(in) + citrate(out) = trans-aconitate(out) + citrate(in). It catalyses the reaction phosphoenolpyruvate(in) + citrate(out) = phosphoenolpyruvate(out) + citrate(in). The catalysed reaction is maleate(in) + citrate(out) = maleate(out) + citrate(in). Functionally, mitochondrial electroneutral antiporter that exports citrate from the mitochondria into the cytosol in exchange for malate. Also able to mediate the exchange of citrate for isocitrate, phosphoenolpyruvate, cis-aconitate and to a lesser extent trans-aconitate, maleate and succinate. In the cytoplasm, citrate plays important roles in fatty acid and sterol synthesis, regulation of glycolysis, protein acetylation, and other physiopathological processes. This is Tricarboxylate transport protein, mitochondrial (SLC25A1) from Homo sapiens (Human).